The chain runs to 834 residues: WW domain-containing adapter protein with coiled-coil homolog (834 aa).

Disordered regions lie at residues 1–247 (MVMH…WSEH), 268–411 (KPKE…SVAT), and 430–504 (VTGA…GAKG). A compositionally biased stretch (low complexity) spans 22–31 (HTSYQSSKYS). Basic and acidic residues predominate over residues 33–50 (SKRDYERDRSSNYRDRDL). The segment covering 53 to 77 (GAGGGGGGGSAGGGGGGSGNGGGPL) has biased composition (gly residues). The segment covering 96-108 (RSHDLRDRSDHRG) has biased composition (basic and acidic residues). Residues 109–119 (GGGGNGRGGSG) show a composition bias toward gly residues. Basic and acidic residues-rich tracts occupy residues 127-168 (KMRD…DRRG), 181-246 (SSRE…DWSE), and 268-303 (KPKE…DRFS). Residues 244–271 (WSEHVSSSGKMYYYNCKTEISQWEKPKE) form the WW domain. Polar residues-rich tracts occupy residues 304 to 314 (RSTYKHSNSSR) and 350 to 363 (GDST…YSLS). Over residues 369–384 (HGGGPGGGGPGGGGGS) the composition is skewed to gly residues. Low complexity-rich tracts occupy residues 402–411 (TANSSASVAT) and 431–466 (TGAT…LRNS). The segment covering 472–496 (GSTSGTTVPTLGSQDPHQHHLNSNA) has biased composition (polar residues).

As to expression, expressed in adult head and thorax and in larval central nervous system and fat body.

It is found in the nucleus. The protein localises to the lysosome. In terms of biological role, acts as a linker between gene transcription and histone H2B monoubiquitination at 'Lys-118'. Regulates the cell-cycle checkpoint activation in response to DNA damage. Positive regulator of amino acid starvation-induced autophagy. Also acts as a negative regulator of basal autophagy. Positively regulates mTor activity. Promotes, in an energy-dependent manner, the assembly of the TTT complex and the RUVBL complex composed of pont and rept into the TTT-RUVBL complex. This leads to dimerization of the mTORC1 complex and its subsequent activation. May negatively regulate the ubiquitin proteasome pathway. Required for habituation, a form of non-associative learning. This Drosophila melanogaster (Fruit fly) protein is WW domain-containing adapter protein with coiled-coil homolog.